A 479-amino-acid chain; its full sequence is Glutamyl-tRNA reductase (479 aa).

Substrate contacts are provided by residues 48–51, serine 104, 109–111, and glutamine 115; these read TCNR and ERQ. Cysteine 49 (nucleophile) is an active-site residue. 189-194 contributes to the NADP(+) binding site; sequence GAGKMG. The tract at residues 417 to 455 is disordered; that stretch reads DAGRSLAEAPDADTPDLGEAPSRCPYMTHDPGGDGTETE.

The protein belongs to the glutamyl-tRNA reductase family. In terms of assembly, homodimer.

The catalysed reaction is (S)-4-amino-5-oxopentanoate + tRNA(Glu) + NADP(+) = L-glutamyl-tRNA(Glu) + NADPH + H(+). Its pathway is porphyrin-containing compound metabolism; protoporphyrin-IX biosynthesis; 5-aminolevulinate from L-glutamyl-tRNA(Glu): step 1/2. Its function is as follows. Catalyzes the NADPH-dependent reduction of glutamyl-tRNA(Glu) to glutamate 1-semialdehyde (GSA). The polypeptide is Glutamyl-tRNA reductase (Salinibacter ruber (strain DSM 13855 / M31)).